Reading from the N-terminus, the 418-residue chain is 3-isopropylmalate dehydratase large subunit (418 aa).

Residues Cys299, Cys359, and Cys362 each contribute to the [4Fe-4S] cluster site.

It belongs to the aconitase/IPM isomerase family. LeuC type 2 subfamily. In terms of assembly, heterodimer of LeuC and LeuD. Requires [4Fe-4S] cluster as cofactor.

It catalyses the reaction (2R,3S)-3-isopropylmalate = (2S)-2-isopropylmalate. It functions in the pathway amino-acid biosynthesis; L-leucine biosynthesis; L-leucine from 3-methyl-2-oxobutanoate: step 2/4. In terms of biological role, catalyzes the isomerization between 2-isopropylmalate and 3-isopropylmalate, via the formation of 2-isopropylmaleate. The sequence is that of 3-isopropylmalate dehydratase large subunit from Nitratidesulfovibrio vulgaris (strain DSM 19637 / Miyazaki F) (Desulfovibrio vulgaris).